The primary structure comprises 152 residues: UPF0225 protein YchJ (152 aa).

Belongs to the UPF0225 family.

The chain is UPF0225 protein YchJ from Salmonella gallinarum (strain 287/91 / NCTC 13346).